We begin with the raw amino-acid sequence, 83 residues long: Hepcidin (83 aa).

A signal peptide spans 1 to 23 (MALSTRTQAACLLLLLLASLSST). Positions 24–53 (TYLHQQMRQTTELQPLHGEESRADIAIPMQ) are excised as a propeptide. Intrachain disulfides connect Cys-65–Cys-81, Cys-68–Cys-71, Cys-69–Cys-77, and Cys-72–Cys-80.

The protein belongs to the hepcidin family. Interacts with SLC40A1; this interaction promotes SLC40A1 rapid ubiquitination. In terms of tissue distribution, highly expressed in the liver and to a much lesser extent in the heart. Secreted in blood.

It is found in the secreted. Functionally, liver-produced hormone that constitutes the main circulating regulator of iron absorption and distribution across tissues. Acts by promoting endocytosis and degradation of SLC40A1, leading to the retention of iron in iron-exporting cells and decreased flow of iron into plasma. Controls the major flows of iron into plasma: absorption of dietary iron in the intestine, recycling of iron by macrophages, which phagocytose old erythrocytes and other cells, and mobilization of stored iron from hepatocytes. The sequence is that of Hepcidin (Hamp) from Mus musculus (Mouse).